A 43-amino-acid polypeptide reads, in one-letter code: MTTANSEEKTYPIFTVRWLSVHALGIPTIFFLGAITAMQFIQR.

The helical transmembrane segment at W18–A34 threads the bilayer. Residue H22 coordinates heme.

The protein belongs to the PsbE/PsbF family. As to quaternary structure, heterodimer of an alpha subunit and a beta subunit. PSII is composed of 1 copy each of membrane proteins PsbA, PsbB, PsbC, PsbD, PsbE, PsbF, PsbH, PsbI, PsbJ, PsbK, PsbL, PsbM, PsbT, PsbX, PsbY, PsbZ, Psb30/Ycf12, at least 3 peripheral proteins of the oxygen-evolving complex and a large number of cofactors. It forms dimeric complexes. Heme b serves as cofactor.

Its subcellular location is the plastid. It localises to the chloroplast thylakoid membrane. This b-type cytochrome is tightly associated with the reaction center of photosystem II (PSII). PSII is a light-driven water:plastoquinone oxidoreductase that uses light energy to abstract electrons from H(2)O, generating O(2) and a proton gradient subsequently used for ATP formation. It consists of a core antenna complex that captures photons, and an electron transfer chain that converts photonic excitation into a charge separation. This Stigeoclonium helveticum (Green alga) protein is Cytochrome b559 subunit beta.